Consider the following 67-residue polypeptide: Large ribosomal subunit protein uL29 (67 aa).

This sequence belongs to the universal ribosomal protein uL29 family.

In Ruminiclostridium cellulolyticum (strain ATCC 35319 / DSM 5812 / JCM 6584 / H10) (Clostridium cellulolyticum), this protein is Large ribosomal subunit protein uL29.